We begin with the raw amino-acid sequence, 396 residues long: UDP-galactose translocator (396 aa).

Transmembrane regions (helical) follow at residues Ala3–Leu23, Tyr37–Ala57, Phe65–Leu85, Leu97–Val117, Thr140–Leu160, Trp169–Gly189, Gly200–Phe220, Leu238–Val258, Pro269–Val289, and Leu315–Val335. The disordered stretch occupies residues Pro358–Asp379. Positions Lys392–Ser396 match the ER retention motif motif.

The protein belongs to the nucleotide-sugar transporter family. SLC35A subfamily. As to quaternary structure, interacts with SLC35A3; the interaction is reduced in the presence of SLC35A4. Found in a complex with SLC35A3 and SLC35A4. In terms of assembly, interacts with B4GALT4.

The protein resides in the endoplasmic reticulum membrane. It localises to the golgi apparatus membrane. It catalyses the reaction UMP(out) + UDP-alpha-D-galactose(in) = UMP(in) + UDP-alpha-D-galactose(out). It carries out the reaction UDP-N-acetyl-alpha-D-galactosamine(in) + UMP(out) = UDP-N-acetyl-alpha-D-galactosamine(out) + UMP(in). The catalysed reaction is UMP(out) + UDP-alpha-D-glucose(in) = UMP(in) + UDP-alpha-D-glucose(out). The enzyme catalyses UMP(out) + UDP-N-acetyl-alpha-D-glucosamine(in) = UMP(in) + UDP-N-acetyl-alpha-D-glucosamine(out). It catalyses the reaction UDP-alpha-D-galactose(in) + AMP(out) = UDP-alpha-D-galactose(out) + AMP(in). It carries out the reaction UDP-alpha-D-galactose(in) + CMP(out) = UDP-alpha-D-galactose(out) + CMP(in). The catalysed reaction is UDP-N-acetyl-alpha-D-galactosamine(out) + UDP-alpha-D-galactose(in) = UDP-N-acetyl-alpha-D-galactosamine(in) + UDP-alpha-D-galactose(out). The enzyme catalyses UDP-N-acetyl-alpha-D-glucosamine(out) + UDP-alpha-D-galactose(in) = UDP-N-acetyl-alpha-D-glucosamine(in) + UDP-alpha-D-galactose(out). It catalyses the reaction UDP-alpha-D-galactose(in) + UDP-alpha-D-glucose(out) = UDP-alpha-D-galactose(out) + UDP-alpha-D-glucose(in). It carries out the reaction UMP(out) + CMP(in) = UMP(in) + CMP(out). The catalysed reaction is UMP(out) + AMP(in) = UMP(in) + AMP(out). Functionally, transports uridine diphosphate galactose (UDP-galactose) from the cytosol into the Golgi apparatus, functioning as an antiporter that exchanges UDP-galactose for UMP. It is also able to exchange UDP-galactose for AMP and CMP, and to transport UDP-N-acetylgalactosamine (UDP-GalNAc) and other nucleotide sugars. As a provider of UDP-galactose to galactosyltransferases present in the Golgi apparatus, it is necessary for globotriaosylceramide/globoside (Gb3Cer) synthesis from lactosylceramide. The polypeptide is UDP-galactose translocator (Homo sapiens (Human)).